Consider the following 489-residue polypeptide: Carboxyl-terminal-processing peptidase 1, chloroplastic (489 aa).

Residues 1–20 (MRLLLPFSSPLSATSSPSTP) are compositionally biased toward low complexity. The segment at 1 to 27 (MRLLLPFSSPLSATSSPSTPQFIPELP) is disordered. The PDZ domain maps to 189-273 (FSRMSKYDIT…TFVVLKVKHG (85 aa)). Catalysis depends on charge relay system residues S403 and K428.

This sequence belongs to the peptidase S41A family.

The protein localises to the plastid. It localises to the chloroplast thylakoid lumen. It catalyses the reaction The enzyme shows specific recognition of a C-terminal tripeptide, Xaa-Yaa-Zaa, in which Xaa is preferably Ala or Leu, Yaa is preferably Ala or Tyr, and Zaa is preferably Ala, but then cleaves at a variable distance from the C-terminus. A typical cleavage is -Ala-Ala-|-Arg-Ala-Ala-Lys-Glu-Asn-Tyr-Ala-Leu-Ala-Ala.. In terms of biological role, protease involved in the C-terminal processing of the chloroplastic D1 protein of photosystem II. This proteolytic processing is necessary to allow the light-driven assembly of the tetranuclear manganese cluster, which is responsible for photosynthetic water oxidation. This Arabidopsis thaliana (Mouse-ear cress) protein is Carboxyl-terminal-processing peptidase 1, chloroplastic (CTPA1).